The chain runs to 325 residues: Olfactory receptor 6Y1 (325 aa).

Residues 1-30 lie on the Extracellular side of the membrane; the sequence is MTTIILEVDNHTVTTRFILLGFPTRPAFQL. An N-linked (GlcNAc...) asparagine glycan is attached at asparagine 10. A helical transmembrane segment spans residues 31–51; it reads LFFSIFLATYLLTLLENLLII. Over 52–59 the chain is Cytoplasmic; it reads LAIHSDGQ. The chain crosses the membrane as a helical span at residues 60–80; that stretch reads LHKPMYFFLSHLSFLEMWYVT. The Extracellular segment spans residues 81-104; it reads VISPKMLVDFLSHDKSISFNGCMT. A disulfide bond links cysteine 102 and cysteine 194. A helical transmembrane segment spans residues 105-125; it reads QLYFFVTFVCTEYILLAIMAF. Over 126–144 the chain is Cytoplasmic; that stretch reads DRYVAICNPLRYPVIMTNQ. A helical membrane pass occupies residues 145–165; it reads LCGTLAGGCWFCGLMTAMIKM. The Extracellular segment spans residues 166–202; the sequence is VFIAQLHYCGMPQINHYFCDISPLLNVSCEDASQAEM. Residue asparagine 191 is glycosylated (N-linked (GlcNAc...) asparagine). Residues 203–222 traverse the membrane as a helical segment; the sequence is VDFFLALMVIAIPLCVVVAS. Residues 223 to 242 are Cytoplasmic-facing; that stretch reads YAAILATILRIPSAQGRQKA. The helical transmembrane segment at 243–263 threads the bilayer; the sequence is FSTCASHLTVVILFYSMTLFT. Topologically, residues 264-276 are extracellular; that stretch reads YARPKLMYAYNSN. Residues 277-297 form a helical membrane-spanning segment; that stretch reads KVVSVLYTVIVPLLNPIIYCL. Topologically, residues 298-325 are cytoplasmic; sequence RNHEVKAALRKTIHCRGSGPQGNGAFSS.

This sequence belongs to the G-protein coupled receptor 1 family.

The protein localises to the cell membrane. Odorant receptor. The polypeptide is Olfactory receptor 6Y1 (OR6Y1) (Homo sapiens (Human)).